The primary structure comprises 114 residues: Ghrelin (114 aa).

The N-terminal stretch at 1-24 (MNFGKAAIFGVVLFCLLWTEGAQA) is a signal peptide. Thr-27 carries the O-decanoyl threonine; alternate lipid modification. The O-octanoyl threonine; alternate moiety is linked to residue Thr-27. Residues 55-114 (GVEDDLAGEEIGVTFPLDMKMTQEQFQKQRAAVQDFLYSSLLSLGSVQDTEDKNENPQSQ) constitute a propeptide, removed in mature form.

Belongs to the motilin family. Post-translationally, O-octanoylated by GOAT/MBOAT4. O-octanoylation or O-decanoylation is essential for activity. The O-decanoylated form ghrelin-27-C10 differs in the length of the carbon backbone of the carboxylic acid bound to Thr-27. 33% of frog ghrelin is O-decanoylated. 80% of frog ghrelin has Asn-52 cleaved from its C-terminus giving rise to ghrelin-27. As to expression, high levels in stomach. Moderate levels in small intestine, pancreas and testis. Low levels in heart, lung and gall bladder.

The protein resides in the secreted. Functionally, ligand for growth hormone secretagogue receptor type 1 (GHSR). Induces the release of growth hormone from the pituitary. Has an appetite-stimulating effect, induces adiposity and stimulates gastric acid secretion. Involved in growth regulation. This is Ghrelin (GHRL) from Aquarana catesbeiana (American bullfrog).